We begin with the raw amino-acid sequence, 46 residues long: Amine oxidase [flavin-containing] A (46 aa).

Belongs to the flavin monoamine oxidase family. In terms of assembly, monomer, homo- or heterodimer (containing two subunits of similar size). Each subunit contains a covalently bound flavin. Enzymatically active as monomer. Requires FAD as cofactor.

It localises to the mitochondrion outer membrane. The catalysed reaction is a secondary aliphatic amine + O2 + H2O = a primary amine + an aldehyde + H2O2. It carries out the reaction a primary methyl amine + O2 + H2O = an aldehyde + H2O2 + NH4(+). The enzyme catalyses (R)-adrenaline + O2 + H2O = (R)-3,4-dihydroxymandelaldehyde + methylamine + H2O2. It catalyses the reaction dopamine + O2 + H2O = 3,4-dihydroxyphenylacetaldehyde + H2O2 + NH4(+). The catalysed reaction is tyramine + O2 + H2O = (4-hydroxyphenyl)acetaldehyde + H2O2 + NH4(+). It carries out the reaction (R)-noradrenaline + O2 + H2O = (R)-3,4-dihydroxymandelaldehyde + H2O2 + NH4(+). The enzyme catalyses serotonin + O2 + H2O = (5-hydroxyindol-3-yl)acetaldehyde + H2O2 + NH4(+). It catalyses the reaction kynuramine + O2 + H2O = 3-(2-aminophenyl)-3-oxopropanal + H2O2 + NH4(+). The catalysed reaction is tryptamine + O2 + H2O = indole-3-acetaldehyde + H2O2 + NH4(+). It carries out the reaction 2-phenylethylamine + O2 + H2O = 2-phenylacetaldehyde + H2O2 + NH4(+). Functionally, catalyzes the oxidative deamination of primary and some secondary amine such as neurotransmitters, with concomitant reduction of oxygen to hydrogen peroxide and has important functions in the metabolism of neuroactive and vasoactive amines in the central nervous system and peripheral tissues. Preferentially oxidizes serotonin. Also catalyzes the oxidative deamination of kynuramine to 3-(2-aminophenyl)-3-oxopropanal that can spontaneously condense to 4-hydroxyquinoline. The polypeptide is Amine oxidase [flavin-containing] A (Ovis aries (Sheep)).